The sequence spans 549 residues: Cation/acetate symporter ActP (549 aa).

The next 13 membrane-spanning stretches (helical) occupy residues 33 to 53 (WQAI…TYWA), 77 to 97 (LAIA…ALVF), 103 to 123 (GLIY…LIAE), 148 to 168 (ILSA…QMVG), 183 to 203 (IAVV…GMLA), 206 to 226 (WVQI…AFMV), 262 to 282 (ISAL…PHIL), 303 to 323 (GFMG…IMLV), 355 to 375 (LFLG…VAGL), 404 to 424 (VSKI…VLFE), 428 to 448 (IAFM…PIIL), 464 to 484 (GGWL…TIWV), and 493 to 513 (IFPY…GIWL).

Belongs to the sodium:solute symporter (SSF) (TC 2.A.21) family.

The protein localises to the cell inner membrane. Functionally, transports acetate. The polypeptide is Cation/acetate symporter ActP (Escherichia coli O1:K1 / APEC).